The primary structure comprises 380 residues: Probable dual-specificity RNA methyltransferase RlmN (380 aa).

The active-site Proton acceptor is the Glu-112. In terms of domain architecture, Radical SAM core spans 118-358 (YPDRVTACLS…TTVRDTRGRE (241 aa)). Cys-125 and Cys-363 are joined by a disulfide. [4Fe-4S] cluster-binding residues include Cys-132, Cys-136, and Cys-139. S-adenosyl-L-methionine is bound by residues 187–188 (GE), Ser-221, 244–246 (SLH), and Asn-320. Cys-363 serves as the catalytic S-methylcysteine intermediate.

The protein belongs to the radical SAM superfamily. RlmN family. The cofactor is [4Fe-4S] cluster.

The protein localises to the cytoplasm. The enzyme catalyses adenosine(2503) in 23S rRNA + 2 reduced [2Fe-2S]-[ferredoxin] + 2 S-adenosyl-L-methionine = 2-methyladenosine(2503) in 23S rRNA + 5'-deoxyadenosine + L-methionine + 2 oxidized [2Fe-2S]-[ferredoxin] + S-adenosyl-L-homocysteine. The catalysed reaction is adenosine(37) in tRNA + 2 reduced [2Fe-2S]-[ferredoxin] + 2 S-adenosyl-L-methionine = 2-methyladenosine(37) in tRNA + 5'-deoxyadenosine + L-methionine + 2 oxidized [2Fe-2S]-[ferredoxin] + S-adenosyl-L-homocysteine. Its function is as follows. Specifically methylates position 2 of adenine 2503 in 23S rRNA and position 2 of adenine 37 in tRNAs. This Salinispora arenicola (strain CNS-205) protein is Probable dual-specificity RNA methyltransferase RlmN.